Consider the following 545-residue polypeptide: Methionine--tRNA ligase (545 aa).

The 'HIGH' region motif lies at 10 to 20; it reads PYANGSLHIGH. Zn(2+)-binding residues include cysteine 141, cysteine 144, cysteine 153, and cysteine 156. Positions 329-333 match the 'KMSKS' region motif; that stretch reads KISTS. Residue threonine 332 participates in ATP binding.

The protein belongs to the class-I aminoacyl-tRNA synthetase family. MetG type 1 subfamily. As to quaternary structure, monomer. It depends on Zn(2+) as a cofactor.

It is found in the cytoplasm. The catalysed reaction is tRNA(Met) + L-methionine + ATP = L-methionyl-tRNA(Met) + AMP + diphosphate. Functionally, is required not only for elongation of protein synthesis but also for the initiation of all mRNA translation through initiator tRNA(fMet) aminoacylation. In Streptococcus pneumoniae (strain 70585), this protein is Methionine--tRNA ligase.